We begin with the raw amino-acid sequence, 367 residues long: DNA replication and repair protein RecF (367 aa).

Position 31 to 38 (31 to 38 (GENGSGKT)) interacts with ATP.

Belongs to the RecF family.

It is found in the cytoplasm. The RecF protein is involved in DNA metabolism; it is required for DNA replication and normal SOS inducibility. RecF binds preferentially to single-stranded, linear DNA. It also seems to bind ATP. This Saccharophagus degradans (strain 2-40 / ATCC 43961 / DSM 17024) protein is DNA replication and repair protein RecF.